A 505-amino-acid polypeptide reads, in one-letter code: Deoxyguanosinetriphosphate triphosphohydrolase (505 aa).

An HD domain is found at 66–273; that stretch reads RLTHSLEVQQ…MEAADDISYC (208 aa).

Belongs to the dGTPase family. Type 1 subfamily. Homotetramer. Mg(2+) serves as cofactor.

The enzyme catalyses dGTP + H2O = 2'-deoxyguanosine + triphosphate + H(+). Functionally, dGTPase preferentially hydrolyzes dGTP over the other canonical NTPs. This is Deoxyguanosinetriphosphate triphosphohydrolase from Escherichia fergusonii (strain ATCC 35469 / DSM 13698 / CCUG 18766 / IAM 14443 / JCM 21226 / LMG 7866 / NBRC 102419 / NCTC 12128 / CDC 0568-73).